The primary structure comprises 431 residues: Cleavage stimulation factor subunit 1 (431 aa).

6 WD repeats span residues 106 to 145 (SHKGPCRVATYSRDGQLIATGSADASIKILDTERMLAKSA), 171 to 210 (DHVDEVTCLAFHPTEQILASGSRDYTLKLFDYSKPSAKRA), 215 to 254 (QEAEMLRSISFHPSGDFILVGTQHPTLRLYDINTFQCFVS), 260 to 301 (QHTD…TTFE), 303 to 343 (AHDG…TLVR), and 395 to 431 (GHNNIVRCIVHSPTNPGFMTCSDDFRARFWYRRSTTD).

In terms of assembly, homodimer. The CSTF complex is composed of CSTF1 (50 kDa subunit), CSTF2 (64 kDa subunit) and CSTF3 (77 kDa subunit). Interacts (via repeats WD) directly with CSTF3. Interacts (via repeat WD6) with BARD1. Interacts with ERCC6.

Its subcellular location is the nucleus. Functionally, one of the multiple factors required for polyadenylation and 3'-end cleavage of mammalian pre-mRNAs. May be responsible for the interaction of CSTF with other factors to form a stable complex on the pre-mRNA. This is Cleavage stimulation factor subunit 1 (Cstf1) from Mus musculus (Mouse).